The primary structure comprises 118 residues: MKNRYIQQFEDAQLKDKSMPTFKAGDTLRLGITIKEGEKTRTQYFEGVCIAIRGNGVDKTFCVRKIGANNIGVEKIFPFYSESLASVEVLRVGRVRRAKLYYLRDRRGKAARIKEVRH.

It belongs to the bacterial ribosomal protein bL19 family.

Functionally, this protein is located at the 30S-50S ribosomal subunit interface and may play a role in the structure and function of the aminoacyl-tRNA binding site. The chain is Large ribosomal subunit protein bL19 (rplS) from Helicobacter pylori (strain J99 / ATCC 700824) (Campylobacter pylori J99).